Reading from the N-terminus, the 505-residue chain is Deoxyguanosinetriphosphate triphosphohydrolase (505 aa).

The region spanning 66-273 is the HD domain; sequence RLTHSMEVQQ…MEAADDISYC (208 aa).

The protein belongs to the dGTPase family. Type 1 subfamily. As to quaternary structure, homotetramer. It depends on Mg(2+) as a cofactor.

It catalyses the reaction dGTP + H2O = 2'-deoxyguanosine + triphosphate + H(+). In terms of biological role, dGTPase preferentially hydrolyzes dGTP over the other canonical NTPs. The sequence is that of Deoxyguanosinetriphosphate triphosphohydrolase from Salmonella paratyphi A (strain AKU_12601).